Reading from the N-terminus, the 438-residue chain is Histidine--tRNA ligase (438 aa).

The protein belongs to the class-II aminoacyl-tRNA synthetase family. As to quaternary structure, homodimer.

It is found in the cytoplasm. The enzyme catalyses tRNA(His) + L-histidine + ATP = L-histidyl-tRNA(His) + AMP + diphosphate + H(+). The protein is Histidine--tRNA ligase of Blochmanniella pennsylvanica (strain BPEN).